The sequence spans 400 residues: uncharacterized protein (400 aa).

The signal sequence occupies residues 1 to 31 (MENPIKPVATRSIGIAVVLLVVGIVIGFAVG).

It belongs to the bacterial solute-binding protein 1 family. WtpA subfamily.

This is an uncharacterized protein from Thermoplasma acidophilum (strain ATCC 25905 / DSM 1728 / JCM 9062 / NBRC 15155 / AMRC-C165).